The sequence spans 197 residues: GTP cyclohydrolase 1 (197 aa).

Positions 88, 91, and 160 each coordinate Zn(2+).

Belongs to the GTP cyclohydrolase I family. Homomer.

The catalysed reaction is GTP + H2O = 7,8-dihydroneopterin 3'-triphosphate + formate + H(+). Its pathway is cofactor biosynthesis; 7,8-dihydroneopterin triphosphate biosynthesis; 7,8-dihydroneopterin triphosphate from GTP: step 1/1. This chain is GTP cyclohydrolase 1, found in Clostridium beijerinckii (strain ATCC 51743 / NCIMB 8052) (Clostridium acetobutylicum).